The chain runs to 204 residues: Leucyl/phenylalanyl-tRNA--protein transferase (204 aa).

This sequence belongs to the L/F-transferase family.

It is found in the cytoplasm. It catalyses the reaction N-terminal L-lysyl-[protein] + L-leucyl-tRNA(Leu) = N-terminal L-leucyl-L-lysyl-[protein] + tRNA(Leu) + H(+). The catalysed reaction is N-terminal L-arginyl-[protein] + L-leucyl-tRNA(Leu) = N-terminal L-leucyl-L-arginyl-[protein] + tRNA(Leu) + H(+). It carries out the reaction L-phenylalanyl-tRNA(Phe) + an N-terminal L-alpha-aminoacyl-[protein] = an N-terminal L-phenylalanyl-L-alpha-aminoacyl-[protein] + tRNA(Phe). Functions in the N-end rule pathway of protein degradation where it conjugates Leu, Phe and, less efficiently, Met from aminoacyl-tRNAs to the N-termini of proteins containing an N-terminal arginine or lysine. The chain is Leucyl/phenylalanyl-tRNA--protein transferase from Sinorhizobium fredii (strain NBRC 101917 / NGR234).